Consider the following 160-residue polypeptide: Large ribosomal subunit protein eL21 (160 aa).

Composition is skewed to basic and acidic residues over residues 112–123 and 136–145; these read NDQKKKEAKEKG and REAHFVRTNG. Residues 112–145 are disordered; the sequence is NDQKKKEAKEKGTWVQLKRQPAPPREAHFVRTNG.

The protein belongs to the eukaryotic ribosomal protein eL21 family. In terms of assembly, component of the large ribosomal subunit.

It is found in the cytoplasm. Its subcellular location is the cytosol. The protein resides in the endoplasmic reticulum. In terms of biological role, component of the large ribosomal subunit. The ribosome is a large ribonucleoprotein complex responsible for the synthesis of proteins in the cell. The chain is Large ribosomal subunit protein eL21 (RPL21) from Capra hircus (Goat).